The sequence spans 251 residues: Proteasome subunit alpha type-7 (251 aa).

It belongs to the peptidase T1A family. The 26S proteasome consists of a 20S proteasome core and two 19S regulatory subunits. The 20S proteasome core is composed of 28 subunits that are arranged in four stacked rings, resulting in a barrel-shaped structure. The two end rings are each formed by seven alpha subunits, and the two central rings are each formed by seven beta subunits. The catalytic chamber with the active sites is on the inside of the barrel.

It localises to the cytoplasm. The protein resides in the nucleus. Functionally, the proteasome is a multicatalytic proteinase complex which is characterized by its ability to cleave peptides with Arg, Phe, Tyr, Leu, and Glu adjacent to the leaving group at neutral or slightly basic pH. The proteasome has an ATP-dependent proteolytic activity. In Carassius auratus (Goldfish), this protein is Proteasome subunit alpha type-7 (psma7).